The following is a 310-amino-acid chain: Ribosomal RNA small subunit methyltransferase H (310 aa).

S-adenosyl-L-methionine-binding positions include 33–35 (GGH), D52, F79, D98, and Q105.

The protein belongs to the methyltransferase superfamily. RsmH family.

It localises to the cytoplasm. The catalysed reaction is cytidine(1402) in 16S rRNA + S-adenosyl-L-methionine = N(4)-methylcytidine(1402) in 16S rRNA + S-adenosyl-L-homocysteine + H(+). In terms of biological role, specifically methylates the N4 position of cytidine in position 1402 (C1402) of 16S rRNA. The sequence is that of Ribosomal RNA small subunit methyltransferase H from Campylobacter jejuni (strain RM1221).